The following is a 477-amino-acid chain: MAPRRVKRANVYDLYRTCKQAGTCPPDVIPKVEGKTIADKILQYGSMGVYLGGLGIGTGSGKPGTGGYIPLRGGGSTTSLSSKPFAGGIPLETLEGIGAFRPGIVEDAGPALEGILPDAPAVVTPEAVPVDEGLSGLDISRELSQEQILSFLHPEGPDDIAVLEVRPTEHDQAHLLSTSTHPNPLFQGPVQQARIIAETSGAENVFVGGSGIGSNAGEDIELTLFAEPRTSTPEVPIKRSRGIFNWFSRRYYTQVPVEDPDEIAAAGSYVFENPVYDSKAFKPAQQPDITLQDEASVTGRDAARLLAGPSGRIGWSRITRPTSLGTRSGVRVGPLYHLRSSFSTIHSPETIELIPTVLEDDTEVLTGVPERDTGFDDVDLDSIASDSPLLPERHHLAFGARRSHIPIVARPGVQTGTVIDTRQMAENSVYVSDNGGQESQQTPTVVINGNINVSMEYFRHYYLHPSLLGRKRKRLFG.

Positions 1–9 (MAPRRVKRA) match the Nuclear localization signal motif. A disulfide bridge links Cys18 with Cys24. The short motif at 469–476 (GRKRKRLF) is the Nuclear localization signal element.

The protein belongs to the papillomaviridae L2 protein family. Interacts with major capsid protein L1. Interacts with E2; this interaction inhibits E2 transcriptional activity but not the DNA replication function E2. Interacts with host GADD45GIP1. Interacts with host HSPA8; this interaction is required for L2 nuclear translocation. Interacts with host importins KPNB2 and KPNB3. Forms a complex with importin alpha2-beta1 heterodimers via interaction with the importin alpha2 adapter. Interacts with host DYNLT1; this interaction is essential for virus intracellular transport during entry. Interacts (via C-terminus) with host retromer subunits VPS35 and VPS29. In terms of processing, highly phosphorylated.

The protein localises to the virion. Its subcellular location is the host nucleus. It localises to the host early endosome. The protein resides in the host Golgi apparatus. Functionally, minor protein of the capsid that localizes along the inner surface of the virion, within the central cavities beneath the L1 pentamers. Plays a role in capsid stabilization through interaction with the major capsid protein L1. Once the virion enters the host cell, L2 escorts the genomic DNA into the nucleus by promoting escape from the endosomal compartments and traffic through the host Golgi network. Mechanistically, the C-terminus of L2 possesses a cell-penetrating peptide that protudes from the host endosome, interacts with host cytoplasmic retromer cargo and thereby mediates the capsid delivery to the host trans-Golgi network. Plays a role through its interaction with host dynein in the intracellular microtubule-dependent transport of viral capsid toward the nucleus. Mediates the viral genome import into the nucleus through binding to host importins. Once within the nucleus, L2 localizes viral genomes to host PML bodies in order to activate early gene expression for establishment of infection. Later on, promotes late gene expression by interacting with the viral E2 protein and by inhibiting its transcriptional activation functions. During virion assembly, encapsidates the genome by direct interaction with the viral DNA. In Cervus elaphus (Red deer), this protein is Minor capsid protein L2.